Here is a 281-residue protein sequence, read N- to C-terminus: Probable superoxide dismutase [Fe] (281 aa).

Fe cation is bound by residues histidine 104, histidine 152, aspartate 236, and histidine 240.

This sequence belongs to the iron/manganese superoxide dismutase family. Requires Fe cation as cofactor.

It catalyses the reaction 2 superoxide + 2 H(+) = H2O2 + O2. Functionally, destroys superoxide anion radicals which are normally produced within the cells and which are toxic to biological systems. This chain is Probable superoxide dismutase [Fe] (sodF), found in Bacillus subtilis (strain 168).